The primary structure comprises 406 residues: Arginine deiminase (406 aa).

The active-site Amidino-cysteine intermediate is cysteine 396.

The protein belongs to the arginine deiminase family.

The protein localises to the cytoplasm. It carries out the reaction L-arginine + H2O = L-citrulline + NH4(+). The protein operates within amino-acid degradation; L-arginine degradation via ADI pathway; carbamoyl phosphate from L-arginine: step 1/2. The polypeptide is Arginine deiminase (Vibrio vulnificus (strain YJ016)).